The sequence spans 201 residues: Sterile alpha motif domain-containing protein 12 (201 aa).

Residues 77-143 form the SAM domain; the sequence is WTQQDVCKWL…LQQVLQLKVR (67 aa).

In terms of tissue distribution, expressed in the brain.

In Homo sapiens (Human), this protein is Sterile alpha motif domain-containing protein 12 (SAMD12).